The chain runs to 642 residues: Threonine--tRNA ligase (642 aa).

Residues 1 to 61 (MPIITLPDGS…EQDSQLAIIT (61 aa)) enclose the TGS domain. A catalytic region spans residues 243–534 (DHRKIGKQLD…LTEEYAGFFP (292 aa)). Residues cysteine 334, histidine 385, and histidine 511 each coordinate Zn(2+).

The protein belongs to the class-II aminoacyl-tRNA synthetase family. In terms of assembly, homodimer. The cofactor is Zn(2+).

The protein resides in the cytoplasm. It catalyses the reaction tRNA(Thr) + L-threonine + ATP = L-threonyl-tRNA(Thr) + AMP + diphosphate + H(+). In terms of biological role, catalyzes the attachment of threonine to tRNA(Thr) in a two-step reaction: L-threonine is first activated by ATP to form Thr-AMP and then transferred to the acceptor end of tRNA(Thr). Also edits incorrectly charged L-seryl-tRNA(Thr). This Proteus mirabilis (strain HI4320) protein is Threonine--tRNA ligase.